A 91-amino-acid chain; its full sequence is UPF0358 protein SSP1677 (91 aa).

It belongs to the UPF0358 family.

This Staphylococcus saprophyticus subsp. saprophyticus (strain ATCC 15305 / DSM 20229 / NCIMB 8711 / NCTC 7292 / S-41) protein is UPF0358 protein SSP1677.